A 518-amino-acid polypeptide reads, in one-letter code: uncharacterized protein (518 aa).

ABC transporter domains follow at residues 4–260 (LSVK…QLEA) and 324–518 (LIFE…TKVL). ATP-binding positions include 36-43 (GANGEGKS) and 357-364 (GANGIGKT).

It belongs to the ABC transporter superfamily.

This is an uncharacterized protein from Bacillus subtilis (strain 168).